A 252-amino-acid chain; its full sequence is Phosphate import ATP-binding protein PstB 1 (252 aa).

An ABC transporter domain is found at 6–247; that stretch reads LQVSDLSVYY…PQHKETEDYI (242 aa). Residue 38–45 participates in ATP binding; it reads GPSGSGKS.

This sequence belongs to the ABC transporter superfamily. Phosphate importer (TC 3.A.1.7) family. In terms of assembly, the complex is composed of two ATP-binding proteins (PstB), two transmembrane proteins (PstC and PstA) and a solute-binding protein (PstS).

The protein localises to the cell membrane. The enzyme catalyses phosphate(out) + ATP + H2O = ADP + 2 phosphate(in) + H(+). Functionally, part of the ABC transporter complex PstSACB involved in phosphate import. Responsible for energy coupling to the transport system. The sequence is that of Phosphate import ATP-binding protein PstB 1 from Streptococcus pneumoniae (strain ATCC BAA-255 / R6).